An 814-amino-acid polypeptide reads, in one-letter code: DNA replication licensing factor Mcm6 (814 aa).

The C4-type zinc-finger motif lies at 152 to 179 (CLDCQTEIRDVEQQFKFTNPTICRNPVC). Residues 339–545 (LYQNLINSLF…VVDYAIARKI (207 aa)) form the MCM domain. ATP contacts are provided by serine 392, threonine 393, alanine 394, lysine 395, serine 396, and asparagine 497. Residues 521-524 (SRFD) carry the Arginine finger motif. Residues arginine 612 and glutamate 615 each contribute to the ADP site. The interval 656–696 (DIHLDEEEGEENENVMDIGEETPEDTPRTNETEENDQDTPA) is disordered. A compositionally biased stretch (acidic residues) spans 659–679 (LDEEEGEENENVMDIGEETPE).

This sequence belongs to the MCM family. In terms of assembly, component of the Mcm2-7 complex. The complex forms a toroidal hexameric ring with the proposed subunit order Mcm2-Mcm6-Mcm4-Mcm7-Mcm3-Mcm5 (By simililarity). The heterodimers of Mcm4/Mcm6 and Mcm3/Mcm5 interact with Mcm2 and Mcm7.

The protein localises to the nucleus. It catalyses the reaction ATP + H2O = ADP + phosphate + H(+). Acts as a component of the MCM2-7 complex (MCM complex) which is the replicative helicase essential for 'once per cell cycle' DNA replication initiation and elongation in eukaryotic cells. Core component of CDC45-MCM-GINS (CMG) helicase, the molecular machine that unwinds template DNA during replication, and around which the replisome is built. The active ATPase sites in the MCM2-7 ring are formed through the interaction surfaces of two neighboring subunits such that a critical structure of a conserved arginine finger motif is provided in trans relative to the ATP-binding site of the Walker A box of the adjacent subunit. The six ATPase active sites, however, are likely to contribute differentially to the complex helicase activity. The protein is DNA replication licensing factor Mcm6 of Anopheles gambiae (African malaria mosquito).